Consider the following 61-residue polypeptide: uncharacterized protein (61 aa).

The Extracellular segment spans residues 1 to 20 (MSSTTSTINLSSLGSAINDV). A helical transmembrane segment spans residues 21–41 (LNIIVQYLPVFVTVAVLFGII). The Cytoplasmic segment spans residues 42–61 (TYMTGGLGGLFSGITGIFGS).

The protein localises to the host membrane. This is an uncharacterized protein from Acidianus filamentous virus 2 (isolate Italy/Pozzuoli) (AFV-2).